An 84-amino-acid chain; its full sequence is ATP synthase subunit c (84 aa).

Transmembrane regions (helical) follow at residues 10 to 30 (IAVGIIVGLASLGTAIGFALL) and 53 to 73 (FIIAGLLDAVPMIGIVIALLF).

It belongs to the ATPase C chain family. In terms of assembly, F-type ATPases have 2 components, F(1) - the catalytic core - and F(0) - the membrane proton channel. F(1) has five subunits: alpha(3), beta(3), gamma(1), delta(1), epsilon(1). F(0) has three main subunits: a(1), b(2) and c(10-14). The alpha and beta chains form an alternating ring which encloses part of the gamma chain. F(1) is attached to F(0) by a central stalk formed by the gamma and epsilon chains, while a peripheral stalk is formed by the delta and b chains.

It is found in the cell inner membrane. In terms of biological role, f(1)F(0) ATP synthase produces ATP from ADP in the presence of a proton or sodium gradient. F-type ATPases consist of two structural domains, F(1) containing the extramembraneous catalytic core and F(0) containing the membrane proton channel, linked together by a central stalk and a peripheral stalk. During catalysis, ATP synthesis in the catalytic domain of F(1) is coupled via a rotary mechanism of the central stalk subunits to proton translocation. Functionally, key component of the F(0) channel; it plays a direct role in translocation across the membrane. A homomeric c-ring of between 10-14 subunits forms the central stalk rotor element with the F(1) delta and epsilon subunits. The chain is ATP synthase subunit c from Vibrio alginolyticus.